The following is a 160-amino-acid chain: 6,7-dimethyl-8-ribityllumazine synthase (160 aa).

5-amino-6-(D-ribitylamino)uracil contacts are provided by residues Trp-26, 59 to 61, and 81 to 83; these read AVE and VVI. 86–87 contacts (2S)-2-hydroxy-3-oxobutyl phosphate; the sequence is GT. His-89 serves as the catalytic Proton donor. Residue Phe-114 participates in 5-amino-6-(D-ribitylamino)uracil binding. Arg-128 provides a ligand contact to (2S)-2-hydroxy-3-oxobutyl phosphate.

Belongs to the DMRL synthase family.

The enzyme catalyses (2S)-2-hydroxy-3-oxobutyl phosphate + 5-amino-6-(D-ribitylamino)uracil = 6,7-dimethyl-8-(1-D-ribityl)lumazine + phosphate + 2 H2O + H(+). It functions in the pathway cofactor biosynthesis; riboflavin biosynthesis; riboflavin from 2-hydroxy-3-oxobutyl phosphate and 5-amino-6-(D-ribitylamino)uracil: step 1/2. Functionally, catalyzes the formation of 6,7-dimethyl-8-ribityllumazine by condensation of 5-amino-6-(D-ribitylamino)uracil with 3,4-dihydroxy-2-butanone 4-phosphate. This is the penultimate step in the biosynthesis of riboflavin. In Frankia casuarinae (strain DSM 45818 / CECT 9043 / HFP020203 / CcI3), this protein is 6,7-dimethyl-8-ribityllumazine synthase.